The chain runs to 391 residues: Aspartate aminotransferase (391 aa).

The L-aspartate site is built by glycine 40 and asparagine 176. An N6-(pyridoxal phosphate)lysine modification is found at lysine 236. Arginine 366 is an L-aspartate binding site.

The protein belongs to the class-I pyridoxal-phosphate-dependent aminotransferase family. Homodimer. The cofactor is pyridoxal 5'-phosphate.

The protein resides in the cytoplasm. It carries out the reaction L-aspartate + 2-oxoglutarate = oxaloacetate + L-glutamate. The protein is Aspartate aminotransferase (aspC) of Pyrococcus horikoshii (strain ATCC 700860 / DSM 12428 / JCM 9974 / NBRC 100139 / OT-3).